Reading from the N-terminus, the 208-residue chain is Guanylate kinase (208 aa).

Residues 4 to 185 (GNLYILSAPS…TLKDLQSILQ (182 aa)) enclose the Guanylate kinase-like domain. An ATP-binding site is contributed by 11–18 (APSGAGKS).

The protein belongs to the guanylate kinase family.

The protein resides in the cytoplasm. The catalysed reaction is GMP + ATP = GDP + ADP. Functionally, essential for recycling GMP and indirectly, cGMP. This chain is Guanylate kinase, found in Haemophilus influenzae (strain 86-028NP).